Here is a 479-residue protein sequence, read N- to C-terminus: Transcription factor CP2-like protein 1 (479 aa).

The Grh/CP2 DB domain maps to arginine 43 to asparagine 280. Disordered regions lie at residues lysine 219 to tyrosine 245 and proline 271 to glycine 301. A compositionally biased stretch (basic and acidic residues) spans lysine 221–tyrosine 245. The interval proline 261–arginine 365 is SAM2-like domain. A compositionally biased stretch (polar residues) spans proline 271–serine 281.

The protein belongs to the grh/CP2 family. CP2 subfamily. In terms of assembly, forms homohexamers via its SAM-like domain. Interacts with MTA1; which is indispensable for TFCP2l1-mediated self-renewal-promoting effect and endoderm-inhibiting action. Highly expressed in placental JEG-3 cells and very low levels of expression in non-steroidogenic cells. No expression was seen in adrenal NCI-H295A cells or in adrenal tissue.

The protein resides in the nucleus. Transcription factor that facilitates establishment and maintenance of pluripotency in embryonic stem cells (ESCs). With KLF2, acts as the major effector of self-renewal that mediates induction of pluripotency downstream of LIF/STAT3 and Wnt/beta-catenin signaling. Required for normal duct development in the salivary gland and kidney. Coordinates the development of the kidney collecting ducts intercalated (IC) and principal (PC) cells, which regulate acid-base and salt-water homeostasis, respectively. Regulates the expression of IC genes including subunits B1 and D2 of the V-ATPase complex, OXGR1, CA12, SLC4A1, AQP6 and IC-specific transcription factor FOXI1. Also regulates the expression of JAG1 and subsequent notch signaling in the collecting duct. JAG1 initiates notch signaling in PCs but inhibits notch signaling in ICs. Acts as a transcriptional suppressor that may suppress UBP1-mediated transcriptional activation. Modulates the placental expression of CYP11A1. The sequence is that of Transcription factor CP2-like protein 1 (TFCP2L1) from Homo sapiens (Human).